The primary structure comprises 340 residues: Glycerol-3-phosphate dehydrogenase [NAD(P)+] (340 aa).

The NADPH site is built by serine 11, tryptophan 12, arginine 33, and lysine 106. Residues lysine 106, glycine 137, and serine 139 each coordinate sn-glycerol 3-phosphate. Alanine 141 serves as a coordination point for NADPH. Sn-glycerol 3-phosphate-binding residues include lysine 192, aspartate 245, serine 255, arginine 256, and asparagine 257. The active-site Proton acceptor is lysine 192. Arginine 256 is a binding site for NADPH. NADPH-binding residues include valine 280 and glutamate 282.

This sequence belongs to the NAD-dependent glycerol-3-phosphate dehydrogenase family.

It localises to the cytoplasm. The enzyme catalyses sn-glycerol 3-phosphate + NAD(+) = dihydroxyacetone phosphate + NADH + H(+). It catalyses the reaction sn-glycerol 3-phosphate + NADP(+) = dihydroxyacetone phosphate + NADPH + H(+). Its pathway is membrane lipid metabolism; glycerophospholipid metabolism. Catalyzes the reduction of the glycolytic intermediate dihydroxyacetone phosphate (DHAP) to sn-glycerol 3-phosphate (G3P), the key precursor for phospholipid synthesis. In Bacillus cereus (strain B4264), this protein is Glycerol-3-phosphate dehydrogenase [NAD(P)+].